The sequence spans 118 residues: Large ribosomal subunit protein uL18 (118 aa).

The disordered stretch occupies residues 1–20 (MISKPDKNKKRQRRHARVRS). Over residues 7 to 20 (KNKKRQRRHARVRS) the composition is skewed to basic residues.

It belongs to the universal ribosomal protein uL18 family. As to quaternary structure, part of the 50S ribosomal subunit; part of the 5S rRNA/L5/L18/L25 subcomplex. Contacts the 5S and 23S rRNAs.

Functionally, this is one of the proteins that bind and probably mediate the attachment of the 5S RNA into the large ribosomal subunit, where it forms part of the central protuberance. The sequence is that of Large ribosomal subunit protein uL18 from Pediococcus pentosaceus (strain ATCC 25745 / CCUG 21536 / LMG 10740 / 183-1w).